The following is a 216-amino-acid chain: Transmembrane emp24 domain-containing protein eca (216 aa).

Residues 1-20 form the signal peptide; sequence MRDQFISLALILCVLHSACG. Over 21–182 the chain is Lumenal; sequence LYFHISETER…FRHTSESTNS (162 aa). One can recognise a GOLD domain in the interval 30 to 126; the sequence is RKCFIEEVPD…QLRVHLDIQV (97 aa). Residues 134 to 164 are a coiled coil; that stretch reads ANVAQKEKLTELQLRIRQLLDQVEQITKEQN. A helical transmembrane segment spans residues 183 to 203; the sequence is RVLWWSLAQTIVLVCMGFWQM. The Cytoplasmic portion of the chain corresponds to 204–216; the sequence is RHLKSFFEAKKLV. Residues 213–216 carry the Prevents secretion from ER motif; that stretch reads KKLV.

It belongs to the EMP24/GP25L family.

The protein localises to the endoplasmic reticulum membrane. Eca and bai are essential, though not redundant, for dorsoventral patterning of the embryo. Specifically required during early embryogenesis for the activity of maternal tkv, while the zygotic tkv is not affected. Involved in Golgi organization. This Drosophila sechellia (Fruit fly) protein is Transmembrane emp24 domain-containing protein eca.